We begin with the raw amino-acid sequence, 153 residues long: Urease accessory protein UreE (153 aa).

The protein belongs to the UreE family.

Its subcellular location is the cytoplasm. In terms of biological role, involved in urease metallocenter assembly. Binds nickel. Probably functions as a nickel donor during metallocenter assembly. This is Urease accessory protein UreE from Acetivibrio thermocellus (strain ATCC 27405 / DSM 1237 / JCM 9322 / NBRC 103400 / NCIMB 10682 / NRRL B-4536 / VPI 7372) (Clostridium thermocellum).